The primary structure comprises 139 residues: Putative pre-16S rRNA nuclease (139 aa).

Belongs to the YqgF nuclease family.

The protein localises to the cytoplasm. Could be a nuclease involved in processing of the 5'-end of pre-16S rRNA. The protein is Putative pre-16S rRNA nuclease of Legionella pneumophila (strain Paris).